We begin with the raw amino-acid sequence, 181 residues long: Protein GrpE (181 aa).

Over residues 1-24 the composition is skewed to acidic residues; sequence MSEENIGENEVETPETEPSAEAEV. A disordered region spans residues 1-26; sequence MSEENIGENEVETPETEPSAEAEVES.

Belongs to the GrpE family. As to quaternary structure, homodimer.

The protein resides in the cytoplasm. Its function is as follows. Participates actively in the response to hyperosmotic and heat shock by preventing the aggregation of stress-denatured proteins, in association with DnaK and GrpE. It is the nucleotide exchange factor for DnaK and may function as a thermosensor. Unfolded proteins bind initially to DnaJ; upon interaction with the DnaJ-bound protein, DnaK hydrolyzes its bound ATP, resulting in the formation of a stable complex. GrpE releases ADP from DnaK; ATP binding to DnaK triggers the release of the substrate protein, thus completing the reaction cycle. Several rounds of ATP-dependent interactions between DnaJ, DnaK and GrpE are required for fully efficient folding. This Rhizorhabdus wittichii (strain DSM 6014 / CCUG 31198 / JCM 15750 / NBRC 105917 / EY 4224 / RW1) (Sphingomonas wittichii) protein is Protein GrpE.